Reading from the N-terminus, the 411-residue chain is Probable tRNA pseudouridine synthase D (411 aa).

The active-site Nucleophile is the Asp-79. The TRUD domain occupies 150–369 (GFPNYFGQQR…STGDRRIVSA (220 aa)).

It belongs to the pseudouridine synthase TruD family.

It catalyses the reaction uridine(13) in tRNA = pseudouridine(13) in tRNA. Could be responsible for synthesis of pseudouridine from uracil-13 in transfer RNAs. In Thermoplasma acidophilum (strain ATCC 25905 / DSM 1728 / JCM 9062 / NBRC 15155 / AMRC-C165), this protein is Probable tRNA pseudouridine synthase D.